The primary structure comprises 162 residues: HTH-type transcriptional regulator IscR (162 aa).

The HTH rrf2-type domain maps to 2 to 131 (RLTSKGRYAV…NNITLGELVN (130 aa)). A DNA-binding region (H-T-H motif) is located at residues 28-51 (LADISERQGISLSYLEQLFSRLRK). Cys92, Cys98, and Cys104 together coordinate [2Fe-2S] cluster.

The cofactor is [2Fe-2S] cluster.

Functionally, regulates the transcription of several operons and genes involved in the biogenesis of Fe-S clusters and Fe-S-containing proteins. This chain is HTH-type transcriptional regulator IscR, found in Shigella sonnei (strain Ss046).